Consider the following 118-residue polypeptide: Large ribosomal subunit protein eL22 (118 aa).

It belongs to the eukaryotic ribosomal protein eL22 family.

The polypeptide is Large ribosomal subunit protein eL22 (RPL22) (Tetrahymena thermophila (strain SB210)).